The primary structure comprises 289 residues: 5'-adenylylsulfate reductase-like 7 (289 aa).

The signal sequence occupies residues 1-23; that stretch reads MNLWVSIFLVSAIAGSCLPSGFA. In terms of domain architecture, Thioredoxin spans 37 to 157; sequence SVIEQKCPRS…LIQFYKETTG (121 aa). N-linked (GlcNAc...) asparagine glycans are attached at residues Asn-132 and Asn-184. Residues 198–218 form a helical membrane-spanning segment; sequence MVLALMFLSLKLAILIFPIMG.

Its subcellular location is the membrane. This is 5'-adenylylsulfate reductase-like 7 (APRL7) from Arabidopsis thaliana (Mouse-ear cress).